The chain runs to 253 residues: Acidic endochitinase pcht28 (253 aa).

Positions 1–24 (MKFNIVSPVALSCLFFLFLTGTLA) are cleaved as a signal peptide. Glu-92 serves as the catalytic Proton donor. A disulfide bond links Cys-212 and Cys-244.

It belongs to the glycosyl hydrolase 19 family. Chitinase class II subfamily.

It is found in the secreted. The protein resides in the extracellular space. The catalysed reaction is Random endo-hydrolysis of N-acetyl-beta-D-glucosaminide (1-&gt;4)-beta-linkages in chitin and chitodextrins.. Its function is as follows. Defense against chitin-containing fungal pathogens. This chain is Acidic endochitinase pcht28, found in Solanum chilense (Tomato).